Here is a 1241-residue protein sequence, read N- to C-terminus: ATP-dependent helicase/nuclease subunit A (1241 aa).

The UvrD-like helicase ATP-binding domain occupies 12 to 485; sequence SQWTDDQWKA…IDLAKNFRSR (474 aa). 33–40 provides a ligand contact to ATP; the sequence is AAAGSGKT. In terms of domain architecture, UvrD-like helicase C-terminal spans 505–805; it reads GEIDYDADAE…RIMTIHKSKG (301 aa).

This sequence belongs to the helicase family. AddA subfamily. Heterodimer of AddA and AddB/RexB. It depends on Mg(2+) as a cofactor.

It catalyses the reaction Couples ATP hydrolysis with the unwinding of duplex DNA by translocating in the 3'-5' direction.. It carries out the reaction ATP + H2O = ADP + phosphate + H(+). Its function is as follows. The heterodimer acts as both an ATP-dependent DNA helicase and an ATP-dependent, dual-direction single-stranded exonuclease. Recognizes the chi site generating a DNA molecule suitable for the initiation of homologous recombination. The AddA nuclease domain is required for chi fragment generation; this subunit has the helicase and 3' -&gt; 5' nuclease activities. The polypeptide is ATP-dependent helicase/nuclease subunit A (Bacillus anthracis).